A 225-amino-acid chain; its full sequence is UPF0725 protein At5g63820 (225 aa).

It belongs to the UPF0725 (EMB2204) family.

This chain is UPF0725 protein At5g63820, found in Arabidopsis thaliana (Mouse-ear cress).